Reading from the N-terminus, the 302-residue chain is Stanniocalcin-2 (302 aa).

Residues 1-24 form the signal peptide; sequence MCAERLGQFMTLALVLATFDPARG. Positions 23-44 are disordered; the sequence is RGTDATNPPEGPQDRSSQQKGR. N73 is a glycosylation site (N-linked (GlcNAc...) asparagine). A disordered region spans residues 217-302; that stretch reads KPPTAPPERQ…EQSEYSDIRR (86 aa). Over residues 227–264 the composition is skewed to basic and acidic residues; that stretch reads PQVDRTKLSRAHHGEAGHHLPEPSSRETGRGAKGERGS. Residues S250 and S251 each carry the phosphoserine; by FAM20C modification. T254 carries the post-translational modification Phosphothreonine; by FAM20C.

It belongs to the stanniocalcin family. In terms of assembly, homodimer; disulfide-linked. As to expression, expressed in a variety of tissues including muscle, heart, pancreas, kidney, spleen, prostate, small intestine, colon and peripheral blood leukocytes.

It is found in the secreted. Functionally, has an anti-hypocalcemic action on calcium and phosphate homeostasis. This Homo sapiens (Human) protein is Stanniocalcin-2 (STC2).